Reading from the N-terminus, the 353-residue chain is MTIVLGRVPKEENDLFDTMDDWLRRDRFVFVGWSGLLLFPCAYFALGGWFTGTTFVTSWYTHGLASSYLEGCNFLTAAVSTPANSLAHSLLLLWGPEAQGDFTRWCQLGGLWTFVALHGAFALIGFMLRQFELARSVQLRPYNAISFSGPIAVFVSVFLIYPLGQSGWFFAPSFGVAAIFRFILFFQGFHNWTLNPFHMMGVAGVLGAALLCAIHGATVENTLFEDGDGANTFRAFNPTQAEETYSMVTANRFWSQIFGVAFSNKRWLHFFMLFVPVTGLWMSAIGVVGLALNLRAYDFVSQEIRAAEDPEFETFYTKNILLNEGIRAWMAAQDQPHENLIFPEEVLPRGNAL.

N-acetylthreonine is present on Thr2. Thr2 is modified (phosphothreonine). A helical membrane pass occupies residues 41-61; the sequence is CAYFALGGWFTGTTFVTSWYT. His118 is a binding site for chlorophyll a. Residues 125–141 traverse the membrane as a helical segment; it reads GFMLRQFELARSVQLRP. Residues Gln130 and Asn143 each contribute to the pheophytin a site. The chain crosses the membrane as a helical span at residues 153–166; sequence VFVSVFLIYPLGQS. Position 198 (His198) interacts with chlorophyll a. The helical transmembrane segment at 208-228 threads the bilayer; that stretch reads AALLCAIHGATVENTLFEDGD. A plastoquinone is bound by residues His215 and Phe262. His215 is a binding site for Fe cation. Residue His269 participates in Fe cation binding. Residues 279–295 form a helical membrane-spanning segment; the sequence is GLWMSAIGVVGLALNLR.

Belongs to the reaction center PufL/M/PsbA/D family. In terms of assembly, PSII is composed of 1 copy each of membrane proteins PsbA, PsbB, PsbC, PsbD, PsbE, PsbF, PsbH, PsbI, PsbJ, PsbK, PsbL, PsbM, PsbT, PsbX, PsbY, PsbZ, Psb30/Ycf12, at least 3 peripheral proteins of the oxygen-evolving complex and a large number of cofactors. It forms dimeric complexes. It depends on The D1/D2 heterodimer binds P680, chlorophylls that are the primary electron donor of PSII, and subsequent electron acceptors. It shares a non-heme iron and each subunit binds pheophytin, quinone, additional chlorophylls, carotenoids and lipids. There is also a Cl(-1) ion associated with D1 and D2, which is required for oxygen evolution. The PSII complex binds additional chlorophylls, carotenoids and specific lipids. as a cofactor.

The protein resides in the plastid. It is found in the chloroplast thylakoid membrane. The catalysed reaction is 2 a plastoquinone + 4 hnu + 2 H2O = 2 a plastoquinol + O2. In terms of biological role, photosystem II (PSII) is a light-driven water:plastoquinone oxidoreductase that uses light energy to abstract electrons from H(2)O, generating O(2) and a proton gradient subsequently used for ATP formation. It consists of a core antenna complex that captures photons, and an electron transfer chain that converts photonic excitation into a charge separation. The D1/D2 (PsbA/PsbD) reaction center heterodimer binds P680, the primary electron donor of PSII as well as several subsequent electron acceptors. D2 is needed for assembly of a stable PSII complex. The protein is Photosystem II D2 protein of Lolium perenne (Perennial ryegrass).